Here is a 65-residue protein sequence, read N- to C-terminus: Large ribosomal subunit protein bL35 (65 aa).

Residues 1 to 23 (MPKMKSNRGAAKRFKRTGSGKFK) form a disordered region. Residues 10 to 23 (AAKRFKRTGSGKFK) show a composition bias toward basic residues.

It belongs to the bacterial ribosomal protein bL35 family.

This is Large ribosomal subunit protein bL35 from Acidithiobacillus ferrooxidans (strain ATCC 53993 / BNL-5-31) (Leptospirillum ferrooxidans (ATCC 53993)).